A 112-amino-acid polypeptide reads, in one-letter code: Large ribosomal subunit protein bL17 (112 aa).

The protein belongs to the bacterial ribosomal protein bL17 family. Part of the 50S ribosomal subunit. Contacts protein L32.

In Heliobacterium modesticaldum (strain ATCC 51547 / Ice1), this protein is Large ribosomal subunit protein bL17.